The primary structure comprises 1765 residues: Tight junction protein ZO-1 (1765 aa).

Residues 23 to 110 enclose the PDZ 1 domain; sequence TVTLHRAPGF…NAKITIRRKK (88 aa). The span at 102–112 shows a compositional bias: basic residues; it reads AKITIRRKKKV. The disordered stretch occupies residues 102-189; it reads AKITIRRKKK…QPAKPTKVTL (88 aa). Over residues 123 to 136 the composition is skewed to acidic residues; that stretch reads PVSDNEDDSYDEDV. Serine 125 carries the post-translational modification Phosphoserine. Tyrosine 132 bears the Phosphotyrosine mark. Residues 149–175 are compositionally biased toward basic and acidic residues; that stretch reads RRGEKSWARDRSASRDRSLSPRSDRRS. Residues serine 175, serine 178, and serine 179 each carry the phosphoserine modification. Threonine 185 bears the Phosphothreonine mark. Residues 186–264 form the PDZ 2 domain; that stretch reads KVTLVKSRKN…KLKMVVQRDE (79 aa). 2 positions are modified to phosphoserine: serine 212 and serine 241. Threonine 267 is subject to Phosphothreonine. Phosphoserine occurs at positions 275, 277, 280, 284, 290, 294, 297, 300, 323, 329, 334, 337, and 353. A disordered region spans residues 296 to 363; sequence ASDHSVRSHD…TPVKHVDDHT (68 aa). Positions 299–308 are enriched in basic and acidic residues; that stretch reads HSVRSHDRPP. Polar residues predominate over residues 325 to 338; sequence HSTQSPQQPSNGSL. A Phosphothreonine modification is found at threonine 354. A PDZ 3 domain is found at 421–502; the sequence is SMKLVKFRKG…GEEVTILAQK (82 aa). The SH3 domain occupies 516–584; sequence GDSFYIRTHF…PNKNRAEQLA (69 aa). Serine 617 and serine 622 each carry phosphoserine. The occludin (OCLN)-binding region stretch occupies residues 633–876; the sequence is YERVVLREAG…GTPPESAITR (244 aa). The Guanylate kinase-like domain maps to 690-791; it reads RLHTIKQIID…WYGALKEAIQ (102 aa). Threonine 809 carries the phosphothreonine modification. Serine 810 and serine 821 each carry phosphoserine. Residue tyrosine 822 is modified to Phosphotyrosine. Phosphoserine occurs at positions 824, 828, and 837. 2 disordered regions span residues 825–941 and 1023–1042; these read APGS…PASS and ALGH…YDPQ. Phosphothreonine is present on residues threonine 846, threonine 848, threonine 854, threonine 861, and threonine 868. Basic and acidic residues predominate over residues 879–892; it reads EPVREDSSGMHHEN. Residues 893–906 are compositionally biased toward low complexity; the sequence is QTYPPYSPQAQPQA. Serine 912 carries the post-translational modification Phosphoserine. At serine 1071 the chain carries Phosphoserine. The disordered stretch occupies residues 1092 to 1585; that stretch reads SYYDDKQPYP…SSTQPPEFDS (494 aa). Basic and acidic residues predominate over residues 1106 to 1124; the sequence is DTQHPRDLDSRQHPEEASE. 2 positions are modified to phosphotyrosine: tyrosine 1139 and tyrosine 1164. Positions 1150–1370 are actin-binding region (ABR); that stretch reads RTSTLRHEEQ…FDRRSFESKP (221 aa). Composition is skewed to basic and acidic residues over residues 1268–1285 and 1335–1346; these read KMFE…KDVN and PPEDIVRSNHYD. At tyrosine 1353 the chain carries Phosphotyrosine. Serine 1365 is subject to Phosphoserine. The span at 1388–1399 shows a compositional bias: low complexity; sequence SQSQPNFSSYSS. The span at 1401–1418 shows a compositional bias: basic and acidic residues; sequence GKPETDAMDRSFSEKRYD. Position 1411 is a phosphoserine (serine 1411). Polar residues-rich tracts occupy residues 1442 to 1468 and 1509 to 1519; these read NSSL…NSYI and GAEQTQKTITP. Residues 1535–1544 show a composition bias toward basic and acidic residues; it reads PFERKFESPK. A phosphoserine mark is found at serine 1542 and serine 1614. Residues 1631–1765 form the ZU5 domain; the sequence is ATARGIFNSN…NCVSVLIDHF (135 aa).

This sequence belongs to the MAGUK family. In terms of assembly, homodimer. Forms heterodimers TJP3. Forms a heterodimer (via PDZ2 domain) with TJP2/ZO2 (via PDZ2 domain). Interacts with OCLN. Interacts with CALM, claudins, CGN/cingulin, CXADR, GJA12, GJD3 and UBN1. Interacts (via ZU5 domain) with CDC42BPB and MYZAP. Interacts (via PDZ domain) with GJA1. Interacts (via PDZ domains) with ANKRD2. Interacts with BVES (via the C-terminus cytoplasmic tail). Interacts with HSPA4. Interacts with KIRREL1. Interacts with DLL1. Interacts with USP53 (via the C-terminal region). Interacts with DNMBP (via C-terminal domain); required for the apical cell-cell junction localization of DNMBP. Interacts with SPEF1. Interacts (via N-terminus) with CTNNA1. Interacts with CLDN18. Interacts with CLDN16 (via TRV motif); this is a prerequisite for anchoring of CLDN16 at the tight junction. Interacts with PKP1; the interaction facilitates TJP1/ZO-1 localization to the plasma membrane. Post-translationally, phosphorylated at tyrosine redidues in response to epidermal growth factor (EGF). This response is dependent on an intact actin microfilament system. Dephosphorylated by Ptprj.

It localises to the cell membrane. It is found in the cell junction. The protein resides in the tight junction. Its subcellular location is the gap junction. Its function is as follows. TjpP1, Tjp2, and Tjp3 are closely related scaffolding proteins that link tight junction (TJ) transmembrane proteins such as claudins, junctional adhesion molecules, and occludin to the actin cytoskeleton. The tight junction acts to limit movement of substances through the paracellular space and as a boundary between the compositionally distinct apical and basolateral plasma membrane domains of epithelial and endothelial cells. Necessary for lumenogenesis, and particularly efficient epithelial polarization and barrier formation. Plays a role in the regulation of cell migration by targeting Cdc42bpb to the leading edge of migrating cells. Plays an important role in podosome formation and associated function, thus regulating cell adhesion and matrix remodeling. With Tjp2 and Tjp3, participates in the junctional retention and stability of the transcription factor Dbpa, but is not involved in its shuttling to the nucleus. May play a role in mediating cell morphology changes during ameloblast differentiation via its role in tight junctions. The polypeptide is Tight junction protein ZO-1 (Rattus norvegicus (Rat)).